A 478-amino-acid polypeptide reads, in one-letter code: Divinyl ether synthase CYP74D3 (478 aa).

C432 contacts heme.

Belongs to the cytochrome P450 family. 9-divinyl ether synthase subfamily. Not detected in leaves, stems or roots of healthy plants.

The protein resides in the cytoplasm. It is found in the cytosol. The catalysed reaction is (9S)-hydroperoxy-(10E,12Z)-octadecadienoate = colneleate + H2O. It carries out the reaction (9S)-hydroperoxy-(10E,12Z,15Z)-octadecatrienoate = colnelenate + H2O. Functionally, strictly inducible cytochrome P450 involved in the biosynthesis of the anti-fungal toxins colneleate and colnelenate. Can use (9S)-hydroperoxy-(10E,12Z)-octadecadienoate (9-HPOD) and (9S)-hydroperoxy-(10E,12Z,15Z)-octadecatrienoate (9-HPOT) as substrates, but has a very low activity with the corresponding 13-hydroperoxides (13-HPOD and 13-POT). This is Divinyl ether synthase CYP74D3 from Nicotiana tabacum (Common tobacco).